The sequence spans 244 residues: Large ribosomal subunit protein uL3 (244 aa).

The disordered stretch occupies residues Lys-215–Lys-244. The span at Ala-235–Lys-244 shows a compositional bias: basic residues.

Belongs to the universal ribosomal protein uL3 family. In terms of assembly, part of the 50S ribosomal subunit. Forms a cluster with proteins L14 and L19.

In terms of biological role, one of the primary rRNA binding proteins, it binds directly near the 3'-end of the 23S rRNA, where it nucleates assembly of the 50S subunit. The sequence is that of Large ribosomal subunit protein uL3 from Koribacter versatilis (strain Ellin345).